We begin with the raw amino-acid sequence, 381 residues long: Chaperone protein DnaJ (381 aa).

In terms of domain architecture, J spans 5-70 (DYYDVLGVSK…EKKAAYDRFG (66 aa)). The CR-type zinc finger occupies 140–218 (GLQKTINVPT…CRGQGRVEKD (79 aa)). Residues C153, C156, C170, C173, C192, C195, C206, and C209 each coordinate Zn(2+). 4 CXXCXGXG motif repeats span residues 153 to 160 (CSSCEGTG), 170 to 177 (CPTCSGMG), 192 to 199 (CPTCSGLG), and 206 to 213 (CKSCRGQG).

This sequence belongs to the DnaJ family. In terms of assembly, homodimer. Requires Zn(2+) as cofactor.

The protein localises to the cytoplasm. Participates actively in the response to hyperosmotic and heat shock by preventing the aggregation of stress-denatured proteins and by disaggregating proteins, also in an autonomous, DnaK-independent fashion. Unfolded proteins bind initially to DnaJ; upon interaction with the DnaJ-bound protein, DnaK hydrolyzes its bound ATP, resulting in the formation of a stable complex. GrpE releases ADP from DnaK; ATP binding to DnaK triggers the release of the substrate protein, thus completing the reaction cycle. Several rounds of ATP-dependent interactions between DnaJ, DnaK and GrpE are required for fully efficient folding. Also involved, together with DnaK and GrpE, in the DNA replication of plasmids through activation of initiation proteins. The protein is Chaperone protein DnaJ of Ruegeria pomeroyi (strain ATCC 700808 / DSM 15171 / DSS-3) (Silicibacter pomeroyi).